The primary structure comprises 673 residues: DNA ligase (673 aa).

NAD(+) is bound by residues 35 to 39 (DAEYD), 84 to 85 (SL), and E115. K117 serves as the catalytic N6-AMP-lysine intermediate. R138, E175, K292, and K316 together coordinate NAD(+). Zn(2+) is bound by residues C410, C413, C428, and C434. The BRCT domain maps to 592–673 (PRKLPLQGLV…FLDLLERGRP (82 aa)).

It belongs to the NAD-dependent DNA ligase family. LigA subfamily. The cofactor is Mg(2+). Mn(2+) serves as cofactor.

It carries out the reaction NAD(+) + (deoxyribonucleotide)n-3'-hydroxyl + 5'-phospho-(deoxyribonucleotide)m = (deoxyribonucleotide)n+m + AMP + beta-nicotinamide D-nucleotide.. DNA ligase that catalyzes the formation of phosphodiester linkages between 5'-phosphoryl and 3'-hydroxyl groups in double-stranded DNA using NAD as a coenzyme and as the energy source for the reaction. It is essential for DNA replication and repair of damaged DNA. The polypeptide is DNA ligase (Methylococcus capsulatus (strain ATCC 33009 / NCIMB 11132 / Bath)).